The following is an 887-amino-acid chain: 3-hydroxy-3-methylglutaryl-coenzyme A reductase (887 aa).

Residues 1–9 (MLSRLFRMH) lie on the Cytoplasmic side of the membrane. Residues 10-39 (GLFVASHPWEVIVGTVTLTICMMSMNMFTG) form a helical membrane-spanning segment. Over 40-56 (NNKICGWNYECPKFEED) the chain is Lumenal. A helical membrane pass occupies residues 57 to 78 (VLSSDIIILTITRCIAILYIYF). Residues 61 to 218 (DIIILTITRC…MTFFPACVSL (158 aa)) form the SSD domain. An INSIG-binding motif motif is present at residues 75–78 (YIYF). The Cytoplasmic segment spans residues 79–89 (QFQNLRQLGSK). Residue K89 forms a Glycyl lysine isopeptide (Lys-Gly) (interchain with G-Cter in ubiquitin) linkage. Residues 90–114 (YILGIAGLFTIFSSFVFSTVVIHFL) form a helical membrane-spanning segment. Topologically, residues 115-123 (DKELTGLNE) are lumenal. The chain crosses the membrane as a helical span at residues 124–149 (ALPFFLLLIDLSRASALAKFALSSNS). Topologically, residues 150–159 (QDEVRENIAR) are cytoplasmic. The helical transmembrane segment at 160-187 (GMAILGPTFTLDALVECLVIGVGTMSGV) threads the bilayer. The Lumenal portion of the chain corresponds to 188–191 (RQLE). A helical membrane pass occupies residues 192–220 (IMCCFGCMSVLANYFVFMTFFPACVSLVL). The Cytoplasmic segment spans residues 221–248 (ELSRESREGRPIWQLSHFARVLEEEENK). A Glycyl lysine isopeptide (Lys-Gly) (interchain with G-Cter in ubiquitin) cross-link involves residue K248. A helical transmembrane segment spans residues 249–275 (PNPVTQRVKMIMSLGLVLVHAHSRWIA). Topologically, residues 276–314 (DPSPQNSTAEQSKVSLGLAEDVSKRIEPSVSLWQFYLSK) are lumenal. Residue N281 is glycosylated (N-linked (GlcNAc...) asparagine). Residues 315-339 (MISMDIEQVITLSLALLLAVKYIFF) traverse the membrane as a helical segment. The Cytoplasmic segment spans residues 340–887 (EQAETESTLS…LQGTCTKKAA (548 aa)). Catalysis depends on charge relay system residues E558, K690, and D766. H865 functions as the Proton donor in the catalytic mechanism. S871 carries the phosphoserine; by AMPK modification.

Belongs to the HMG-CoA reductase family. As to quaternary structure, homotetramer. Homodimer. Interacts (via its SSD) with INSIG1; the interaction, accelerated by sterols, leads to the recruitment of HMGCR to AMFR/gp78 for its ubiquitination by the sterol-mediated ERAD pathway. Interacts with UBIAD1. In terms of processing, undergoes sterol-mediated ubiquitination and ER-associated degradation (ERAD). Accumulation of sterols in the endoplasmic reticulum (ER) membrane, triggers binding of the reductase to the ER membrane protein INSIG1 or INSIG2. The INSIG1 binding leads to the recruitment of the ubiquitin ligase, AMFR/gp78, RNF139 or RNF145, initiating ubiquitination of the reductase. The ubiquitinated reductase is then extracted from the ER membrane and delivered to cytosolic 26S proteosomes by a mechanism probably mediated by the ATPase Valosin-containing protein VCP/p97. The INSIG2-binding leads to the recruitment of the ubiquitin ligase RNF139, initiating ubiquitination of the reductase. Lys-248 is the main site of ubiquitination. Ubiquitination is enhanced by the presence of a geranylgeranylated protein. N-glycosylated. Deglycosylated by NGLY1 on release from the endoplasmic reticulum (ER) in a sterol-mediated manner. Post-translationally, phosphorylated. Phosphorylation at Ser-871 reduces the catalytic activity.

It is found in the endoplasmic reticulum membrane. Its subcellular location is the peroxisome membrane. The catalysed reaction is (R)-mevalonate + 2 NADP(+) + CoA = (3S)-3-hydroxy-3-methylglutaryl-CoA + 2 NADPH + 2 H(+). Its pathway is metabolic intermediate biosynthesis; (R)-mevalonate biosynthesis; (R)-mevalonate from acetyl-CoA: step 3/3. With respect to regulation, regulated by a negative feedback mechanism through sterols and non-sterol metabolites derived from mevalonate. Phosphorylation at Ser-871 down-regulates the catalytic activity. Functionally, catalyzes the conversion of (3S)-hydroxy-3-methylglutaryl-CoA (HMG-CoA) to mevalonic acid, the rate-limiting step in the synthesis of cholesterol and other isoprenoids, thus plays a critical role in cellular cholesterol homeostasis. In Rattus norvegicus (Rat), this protein is 3-hydroxy-3-methylglutaryl-coenzyme A reductase (Hmgcr).